A 380-amino-acid polypeptide reads, in one-letter code: Anhydro-N-acetylmuramic acid kinase (380 aa).

9–16 (GTSADGVD) provides a ligand contact to ATP.

It belongs to the anhydro-N-acetylmuramic acid kinase family.

It catalyses the reaction 1,6-anhydro-N-acetyl-beta-muramate + ATP + H2O = N-acetyl-D-muramate 6-phosphate + ADP + H(+). Its pathway is amino-sugar metabolism; 1,6-anhydro-N-acetylmuramate degradation. The protein operates within cell wall biogenesis; peptidoglycan recycling. In terms of biological role, catalyzes the specific phosphorylation of 1,6-anhydro-N-acetylmuramic acid (anhMurNAc) with the simultaneous cleavage of the 1,6-anhydro ring, generating MurNAc-6-P. Is required for the utilization of anhMurNAc either imported from the medium or derived from its own cell wall murein, and thus plays a role in cell wall recycling. In Synechococcus sp. (strain CC9902), this protein is Anhydro-N-acetylmuramic acid kinase.